Consider the following 273-residue polypeptide: Large ribosomal subunit protein uL2 (273 aa).

Disordered regions lie at residues 28 to 54 (KPYA…TRHI) and 221 to 273 (RGTA…RRTK). A compositionally biased stretch (low complexity) spans 39–48 (KSGGRNNNGR).

Belongs to the universal ribosomal protein uL2 family. Part of the 50S ribosomal subunit. Forms a bridge to the 30S subunit in the 70S ribosome.

One of the primary rRNA binding proteins. Required for association of the 30S and 50S subunits to form the 70S ribosome, for tRNA binding and peptide bond formation. It has been suggested to have peptidyltransferase activity; this is somewhat controversial. Makes several contacts with the 16S rRNA in the 70S ribosome. This chain is Large ribosomal subunit protein uL2, found in Pectobacterium carotovorum subsp. carotovorum (strain PC1).